We begin with the raw amino-acid sequence, 657 residues long: UvrABC system protein B (657 aa).

In terms of domain architecture, Helicase ATP-binding spans 29–416 (KLAEFQTNEQ…LSHNNVVEQL (388 aa)). Residue 42-49 (GATGTGKT) coordinates ATP. The short motif at 95–118 (YFDFYQPEAYLPAKGVYIEKSATV) is the Beta-hairpin element. The region spanning 435–597 (QVEDLVSEII…KTPMTVQKPI (163 aa)) is the Helicase C-terminal domain. In terms of domain architecture, UVR spans 615 to 650 (AALIKQLTKEMKQAAANQNYELAIEIRDSIFELEKQ).

Belongs to the UvrB family. In terms of assembly, forms a heterotetramer with UvrA during the search for lesions. Interacts with UvrC in an incision complex.

The protein localises to the cytoplasm. Its function is as follows. The UvrABC repair system catalyzes the recognition and processing of DNA lesions. A damage recognition complex composed of 2 UvrA and 2 UvrB subunits scans DNA for abnormalities. Upon binding of the UvrA(2)B(2) complex to a putative damaged site, the DNA wraps around one UvrB monomer. DNA wrap is dependent on ATP binding by UvrB and probably causes local melting of the DNA helix, facilitating insertion of UvrB beta-hairpin between the DNA strands. Then UvrB probes one DNA strand for the presence of a lesion. If a lesion is found the UvrA subunits dissociate and the UvrB-DNA preincision complex is formed. This complex is subsequently bound by UvrC and the second UvrB is released. If no lesion is found, the DNA wraps around the other UvrB subunit that will check the other stand for damage. In Mycoplasma pneumoniae (strain ATCC 29342 / M129 / Subtype 1) (Mycoplasmoides pneumoniae), this protein is UvrABC system protein B.